The sequence spans 547 residues: Sesquiterpene synthase TPS3 (547 aa).

(2E,6E)-farnesyl diphosphate contacts are provided by Arg265, Asp302, Asp306, Arg443, and Asp446. Asp302 and Asp306 together coordinate Mg(2+). Residues 302–306 carry the DDXXD motif motif; that stretch reads DDIYD. Residues Asp446, Thr450, and Glu454 each coordinate Mg(2+).

Belongs to the terpene synthase family. Tpsb subfamily. As to quaternary structure, monomer. Mg(2+) serves as cofactor.

The protein localises to the cytoplasm. The catalysed reaction is (2E,6E)-farnesyl diphosphate = (1S,5S,6R)-alpha-bergamotene + diphosphate. The protein operates within secondary metabolite biosynthesis; terpenoid biosynthesis. Sesquiterpene synthase involved in the biosynthesis of volatile organic compounds. Mediates the conversion of (2E,6E)-farnesyl diphosphate (FPP) into alpha-bergamotene. Does not use (2E)-geranyl diphosphate (GPP) as substrate. In Cananga odorata (Ylang-ylang tree), this protein is Sesquiterpene synthase TPS3.